The chain runs to 1367 residues: Paired amphipathic helix protein Sin3-like 2 (1367 aa).

The disordered stretch occupies residues 14–44; that stretch reads QFKRPLGSSRGESYEQSPITGGGSIGEGGIN. The span at 33-42 shows a compositional bias: gly residues; it reads TGGGSIGEGG. 2 consecutive PAH domains span residues 46-116 and 130-200; these read QKLT…LPKG and KTVE…LPDS. The interval 212-322 is disordered; sequence SQAQRYDDRG…EAYSGPASHS (111 aa). Composition is skewed to basic and acidic residues over residues 230–286 and 299–311; these read MFME…SRDL and FSEK…RMEG. The PAH 3 domain occupies 327–396; the sequence is LKSMYNQAFL…DEFNQFFERC (70 aa). Disordered stretches follow at residues 417–446, 786–883, 912–946, and 958–1031; these read EENL…KERS, DVHA…LSKP, QSDT…DSED, and ATAK…EGME. Basic and acidic residues-rich tracts occupy residues 424–446 and 806–819; these read VKGE…KERS and SSGK…DLAN. Polar residues-rich tracts occupy residues 851–876 and 912–923; these read ATSS…SSGS and QSDTSKANSNYD. Positions 958 to 967 are enriched in basic and acidic residues; sequence ATAKTEHSVE. Acidic residues-rich tracts occupy residues 968–989 and 997–1016; these read AEGE…EAGE and IGDE…EHDE. Ser-1023 bears the Phosphoserine mark.

It localises to the nucleus. In terms of biological role, acts as a transcriptional repressor. Plays roles in regulating gene expression and genome stability. The chain is Paired amphipathic helix protein Sin3-like 2 (SNL2) from Arabidopsis thaliana (Mouse-ear cress).